Reading from the N-terminus, the 459-residue chain is tRNA modification GTPase MnmE (459 aa).

The (6S)-5-formyl-5,6,7,8-tetrahydrofolate site is built by R29, E91, and R130. The 157-residue stretch at 225 to 381 (GVKVAIVGRP…LEEALEQLVT (157 aa)) folds into the TrmE-type G domain. N235 is a binding site for K(+). GTP contacts are provided by residues 235–240 (NVGKSS), 254–260 (TDLPGTT), and 279–282 (DTAG). Mg(2+) is bound at residue S239. The K(+) site is built by T254, L256, and T259. A Mg(2+)-binding site is contributed by T260. K459 lines the (6S)-5-formyl-5,6,7,8-tetrahydrofolate pocket.

It belongs to the TRAFAC class TrmE-Era-EngA-EngB-Septin-like GTPase superfamily. TrmE GTPase family. As to quaternary structure, homodimer. Heterotetramer of two MnmE and two MnmG subunits. The cofactor is K(+).

It localises to the cytoplasm. Exhibits a very high intrinsic GTPase hydrolysis rate. Involved in the addition of a carboxymethylaminomethyl (cmnm) group at the wobble position (U34) of certain tRNAs, forming tRNA-cmnm(5)s(2)U34. In Synechococcus sp. (strain JA-2-3B'a(2-13)) (Cyanobacteria bacterium Yellowstone B-Prime), this protein is tRNA modification GTPase MnmE.